Here is a 20-residue protein sequence, read N- to C-terminus: Poneritoxin (20 aa).

Methionine 18 carries the methionine sulfoxide; in form U1-PONTX-Dq3c modification. Lysine 19 carries the post-translational modification Lysine amide; in form U1-PONTX-Dq3a and U1-PONTX-Dq3c.

Post-translationally, the peptide spanning residues 2 to 19 occurs in 3 forms and has been given 3 different names. U1-PONTX-Dq3a has an amidated Lys-19, U1-PONTX-Dq3c has an amidated Lys-19 and an oxidized Met-18, and U1-PONTX-Dq3b has no modifications at either Met-18 or Lys-19. Expressed by the venom gland.

The protein resides in the secreted. In terms of biological role, may have antimicrobial properties, like most ant linear peptides. This Dinoponera quadriceps (South American ant) protein is Poneritoxin.